Consider the following 62-residue polypeptide: Small EDRK-rich factor 1 (62 aa).

2 stretches are compositionally biased toward basic and acidic residues: residues 1–30 (MARGNQREIARQKNMKKTQEISKGKRKEDS) and 50–62 (IANEKKSMQTTEK). The interval 1 to 62 (MARGNQREIA…EKKSMQTTEK (62 aa)) is disordered.

Belongs to the SERF family. Interacts with SNCA; this interaction promotes the aggregation of SNCA. Expressed in brain (at protein level). Highly expressed in the testis.

Its subcellular location is the cytoplasm. The protein localises to the cytosol. It localises to the nucleus. Positive regulator of amyloid protein aggregation and proteotoxicity. Induces conformational changes in amyloid proteins, such as APP, HTT, and SNCA, driving them into compact formations preceding the formation of aggregates. This chain is Small EDRK-rich factor 1 (Serf1), found in Mus musculus (Mouse).